The following is a 573-amino-acid chain: Putative cytochrome c oxidase subunit 1-beta (573 aa).

A helical membrane pass occupies residues 53-73; the sequence is VIGHLYLATSFGFFLLGGVLA. His100 provides a ligand contact to Fe(II)-heme a. 6 helical membrane passes run 103–123, 141–161, 188–208, 227–247, 272–292, and 304–324; these read IMMLLFATPLFAGFTNVIMPL, WMYLFGGLMVVSGFLTPGGAA, GLVVSGVSTTLSAVNFISTII, ILFTSILVLPAFPVLTAALLM, LFWFFGHPEVYIVALPFFGIV, and IFGYVSLVGATIAITFLSAVV. Cu cation contacts are provided by His278 and Tyr282. Positions 278 to 282 form a cross-link, 1'-histidyl-3'-tyrosine (His-Tyr); sequence HPEVY. Cu cation is bound by residues His327 and His328. The next 2 helical transmembrane spans lie at 329–349 and 373–393; these read MFATGAVLLPFFSLMSFLIAV and MLWACGFLVTFLLGGMSGVLI. A heme a3-binding site is contributed by His411. Transmembrane regions (helical) follow at residues 412–432, 447–467, and 490–510; these read LHYVLFGTVVFAMFAGFYFWW, IHFWTLFVGFQTTFLVQHWLG, and ISSIGAFLLGLSTLPFLYNVW. Fe(II)-heme a is bound at residue His413.

The protein belongs to the heme-copper respiratory oxidase family. As to quaternary structure, associates with subunits II, III and IV to form cytochrome c oxidase. Requires Cu(2+) as cofactor. Heme is required as a cofactor.

The protein resides in the cell membrane. It catalyses the reaction 4 Fe(II)-[cytochrome c] + O2 + 8 H(+)(in) = 4 Fe(III)-[cytochrome c] + 2 H2O + 4 H(+)(out). The protein operates within energy metabolism; oxidative phosphorylation. Cytochrome c oxidase is the component of the respiratory chain that catalyzes the reduction of oxygen to water. Subunits 1-3 form the functional core of the enzyme complex. CO I is the catalytic subunit of the enzyme. Electrons originating in cytochrome c are transferred via the copper A center of subunit 2 and heme A of subunit 1 to the bimetallic center formed by heme A3 and copper B. The polypeptide is Putative cytochrome c oxidase subunit 1-beta (ctaD2) (Streptomyces coelicolor (strain ATCC BAA-471 / A3(2) / M145)).